Consider the following 72-residue polypeptide: Large ribosomal subunit protein bL31 (72 aa).

Positions 16, 18, 38, and 41 each coordinate Zn(2+).

Belongs to the bacterial ribosomal protein bL31 family. Type A subfamily. In terms of assembly, part of the 50S ribosomal subunit. The cofactor is Zn(2+).

Binds the 23S rRNA. The sequence is that of Large ribosomal subunit protein bL31 from Aliivibrio fischeri (strain ATCC 700601 / ES114) (Vibrio fischeri).